The primary structure comprises 254 residues: Glycerol operon regulatory protein (254 aa).

An HTH iclR-type domain is found at 5–67 (IQSLERAAAM…PASGRYQLGA (63 aa)). Positions 27–46 (LSDIASTLGLAKGTAHGILR) form a DNA-binding region, H-T-H motif. Residues 82-251 (LRARALVWTD…AAAVSRDLGA (170 aa)) form the IclR-ED domain.

Its function is as follows. May be an activator protein for the gylABX operon. The polypeptide is Glycerol operon regulatory protein (gylR) (Streptomyces griseus).